Consider the following 237-residue polypeptide: Small ribosomal subunit protein eS4 (237 aa).

The S4 RNA-binding domain occupies valine 37–aspartate 99.

Belongs to the eukaryotic ribosomal protein eS4 family.

The sequence is that of Small ribosomal subunit protein eS4 from Natronomonas pharaonis (strain ATCC 35678 / DSM 2160 / CIP 103997 / JCM 8858 / NBRC 14720 / NCIMB 2260 / Gabara) (Halobacterium pharaonis).